A 216-amino-acid polypeptide reads, in one-letter code: NADH-quinone oxidoreductase subunit C (216 aa).

This sequence belongs to the complex I 30 kDa subunit family. As to quaternary structure, NDH-1 is composed of 14 different subunits. Subunits NuoB, C, D, E, F, and G constitute the peripheral sector of the complex.

The protein resides in the cell inner membrane. The catalysed reaction is a quinone + NADH + 5 H(+)(in) = a quinol + NAD(+) + 4 H(+)(out). Its function is as follows. NDH-1 shuttles electrons from NADH, via FMN and iron-sulfur (Fe-S) centers, to quinones in the respiratory chain. The immediate electron acceptor for the enzyme in this species is believed to be ubiquinone. Couples the redox reaction to proton translocation (for every two electrons transferred, four hydrogen ions are translocated across the cytoplasmic membrane), and thus conserves the redox energy in a proton gradient. The chain is NADH-quinone oxidoreductase subunit C from Francisella tularensis subsp. holarctica (strain OSU18).